A 285-amino-acid polypeptide reads, in one-letter code: ATP synthase gamma chain (285 aa).

Belongs to the ATPase gamma chain family. As to quaternary structure, F-type ATPases have 2 components, CF(1) - the catalytic core - and CF(0) - the membrane proton channel. CF(1) has five subunits: alpha(3), beta(3), gamma(1), delta(1), epsilon(1). CF(0) has three main subunits: a, b and c.

Its subcellular location is the cell membrane. Produces ATP from ADP in the presence of a proton gradient across the membrane. The gamma chain is believed to be important in regulating ATPase activity and the flow of protons through the CF(0) complex. The chain is ATP synthase gamma chain from Halalkalibacterium halodurans (strain ATCC BAA-125 / DSM 18197 / FERM 7344 / JCM 9153 / C-125) (Bacillus halodurans).